Reading from the N-terminus, the 575-residue chain is Probable lysosomal cobalamin transporter (575 aa).

5 helical membrane-spanning segments follow: residues 8-28, 46-66, 95-115, 144-164, and 188-208; these read LIWV…SVFI, IVAI…VALV, LVYY…VPFV, YTLS…FVPI, and ALTF…ALHT. An N-linked (GlcNAc...) asparagine glycan is attached at Asn233. Transmembrane regions (helical) follow at residues 314-334, 376-396, 420-440, and 504-524; these read LVGL…ILTA, AIFT…IATV, VMTA…SMIV, and FGAI…LALI. Residues 537 to 549 are compositionally biased toward acidic residues; sequence QLDEDAEEAEEEA. Positions 537 to 556 are disordered; that stretch reads QLDEDAEEAEEEALLSGSRR.

This sequence belongs to the LIMR family. LMBRD1 subfamily.

The protein localises to the lysosome membrane. Its function is as follows. Probable lysosomal cobalamin transporter. Required to export cobalamin from lysosomes allowing its conversion to cofactors. The sequence is that of Probable lysosomal cobalamin transporter from Emericella nidulans (strain FGSC A4 / ATCC 38163 / CBS 112.46 / NRRL 194 / M139) (Aspergillus nidulans).